The chain runs to 629 residues: Putative polypeptide N-acetylgalactosaminyltransferase 10 (629 aa).

The Cytoplasmic portion of the chain corresponds to 1–12; that stretch reads MGLSRYLSRRHH. A helical; Signal-anchor for type II membrane protein membrane pass occupies residues 13 to 33; sequence WVIQYCALLLFLYFIYSYVAV. Residues 34 to 629 lie on the Lumenal side of the membrane; sequence SNDAPRLNEE…RQANEHKELE (596 aa). N-linked (GlcNAc...) asparagine glycosylation is found at Asn143 and Asn177. Disulfide bonds link Cys154–Cys385, Cys376–Cys454, Cys493–Cys510, Cys539–Cys556, and Cys582–Cys598. Residues 163 to 275 are catalytic subdomain A; the sequence is LPTVSVIFPF…YNWLPPLLDP (113 aa). Residues Asp204 and Arg236 each coordinate substrate. 2 residues coordinate Mn(2+): Asp259 and His261. Residues 331–393 are catalytic subdomain B; sequence PFDSPVMAGG…PCSRVAHIYR (63 aa). Trp362 contacts substrate. His390 contributes to the Mn(2+) binding site. Arg393 provides a ligand contact to substrate. Residues 393-406 form a flexible loop region; sequence RCKYAPFKNAGMGD. The 104-residue stretch at 526 to 629 folds into the Ricin B-type lectin domain; sequence TRWHDIRPKG…RQANEHKELE (104 aa).

Belongs to the glycosyltransferase 2 family. GalNAc-T subfamily. Requires Mn(2+) as cofactor.

Its subcellular location is the golgi apparatus membrane. The catalysed reaction is L-seryl-[protein] + UDP-N-acetyl-alpha-D-galactosamine = a 3-O-[N-acetyl-alpha-D-galactosaminyl]-L-seryl-[protein] + UDP + H(+). The enzyme catalyses L-threonyl-[protein] + UDP-N-acetyl-alpha-D-galactosamine = a 3-O-[N-acetyl-alpha-D-galactosaminyl]-L-threonyl-[protein] + UDP + H(+). Its pathway is protein modification; protein glycosylation. May catalyze the initial reaction in O-linked oligosaccharide biosynthesis, the transfer of an N-acetyl-D-galactosamine residue to a serine or threonine residue on the protein receptor. The chain is Putative polypeptide N-acetylgalactosaminyltransferase 10 from Caenorhabditis briggsae.